The primary structure comprises 100 residues: Small ribosomal subunit protein uS14c (100 aa).

Belongs to the universal ribosomal protein uS14 family. Part of the 30S ribosomal subunit.

It is found in the plastid. The protein localises to the chloroplast. Binds 16S rRNA, required for the assembly of 30S particles. The polypeptide is Small ribosomal subunit protein uS14c (Emiliania huxleyi (Coccolithophore)).